The primary structure comprises 109 residues: Large ribosomal subunit protein uL24 (109 aa).

This sequence belongs to the universal ribosomal protein uL24 family. In terms of assembly, part of the 50S ribosomal subunit.

Functionally, one of two assembly initiator proteins, it binds directly to the 5'-end of the 23S rRNA, where it nucleates assembly of the 50S subunit. Its function is as follows. One of the proteins that surrounds the polypeptide exit tunnel on the outside of the subunit. The polypeptide is Large ribosomal subunit protein uL24 (Rickettsia africae (strain ESF-5)).